A 346-amino-acid polypeptide reads, in one-letter code: Histidinol-phosphate aminotransferase (346 aa).

Lysine 209 carries the N6-(pyridoxal phosphate)lysine modification.

Belongs to the class-II pyridoxal-phosphate-dependent aminotransferase family. Histidinol-phosphate aminotransferase subfamily. As to quaternary structure, homodimer. Pyridoxal 5'-phosphate is required as a cofactor.

It catalyses the reaction L-histidinol phosphate + 2-oxoglutarate = 3-(imidazol-4-yl)-2-oxopropyl phosphate + L-glutamate. Its pathway is amino-acid biosynthesis; L-histidine biosynthesis; L-histidine from 5-phospho-alpha-D-ribose 1-diphosphate: step 7/9. This Flavobacterium psychrophilum (strain ATCC 49511 / DSM 21280 / CIP 103535 / JIP02/86) protein is Histidinol-phosphate aminotransferase.